The sequence spans 62 residues: Conotoxin Mi5.2 (62 aa).

An N-terminal signal peptide occupies residues 1–19; it reads MRCVPVFIILLLLIPSASS. Positions 20–50 are excised as a propeptide; sequence VDVQPLTRDDVPLASFLDDARRTLRSPWMTR.

The protein belongs to the conotoxin T superfamily. In terms of processing, contains 2 disulfide bonds that can be either 'C1-C3, C2-C4' or 'C1-C4, C2-C3', since these disulfide connectivities have been observed for conotoxins with cysteine framework V (for examples, see AC P0DQQ7 and AC P81755). As to expression, expressed by the venom duct.

It is found in the secreted. This is Conotoxin Mi5.2 from Conus miles (Soldier cone).